The chain runs to 190 residues: Interferon alpha-7 (190 aa).

Residues 1–23 (MARLCAFLMVLAVMSYWPTCCLG) form the signal peptide. Disulfide bonds link cysteine 24–cysteine 122 and cysteine 52–cysteine 162. The N-linked (GlcNAc...) asparagine glycan is linked to asparagine 101.

It belongs to the alpha/beta interferon family.

It localises to the secreted. Functionally, produced by macrophages, IFN-alpha have antiviral activities. Interferon stimulates the production of two enzymes: a protein kinase and an oligoadenylate synthetase. In Mus musculus (Mouse), this protein is Interferon alpha-7 (Ifna7).